The primary structure comprises 334 residues: Aspartate carbamoyltransferase catalytic subunit (334 aa).

The carbamoyl phosphate site is built by arginine 71 and threonine 72. Lysine 99 lines the L-aspartate pocket. Arginine 121, histidine 151, and glutamine 154 together coordinate carbamoyl phosphate. L-aspartate-binding residues include arginine 184 and arginine 239. The carbamoyl phosphate site is built by glycine 280 and proline 281.

The protein belongs to the aspartate/ornithine carbamoyltransferase superfamily. ATCase family. In terms of assembly, heterododecamer (2C3:3R2) of six catalytic PyrB chains organized as two trimers (C3), and six regulatory PyrI chains organized as three dimers (R2).

The catalysed reaction is carbamoyl phosphate + L-aspartate = N-carbamoyl-L-aspartate + phosphate + H(+). Its pathway is pyrimidine metabolism; UMP biosynthesis via de novo pathway; (S)-dihydroorotate from bicarbonate: step 2/3. Catalyzes the condensation of carbamoyl phosphate and aspartate to form carbamoyl aspartate and inorganic phosphate, the committed step in the de novo pyrimidine nucleotide biosynthesis pathway. The polypeptide is Aspartate carbamoyltransferase catalytic subunit (Pseudomonas syringae pv. tomato (strain ATCC BAA-871 / DC3000)).